Reading from the N-terminus, the 810-residue chain is Transitional endoplasmic reticulum ATPase homolog 2 (810 aa).

ATP contacts are provided by residues 252–258 (PGTGKTL), N353, H389, and 526–531 (GCGKTL). Over residues 713 to 727 (RQEKERQDRSARGEE) the composition is skewed to basic and acidic residues. Disordered regions lie at residues 713 to 732 (RQEK…MEDE) and 777 to 810 (FGNN…DLYN). Residues 793 to 802 (PVGGNGGSGG) show a composition bias toward gly residues. The segment at 805–810 (DDDLYN) is interaction with ufd-2.

The protein belongs to the AAA ATPase family. CDC48 subfamily. As to quaternary structure, homohexamer; oligomerization is ATP-independent. Forms a ring-shaped particle of 18.3 nm diameter, that displays 6-fold radial symmetry. Interacts with cdc-48.1 and thus may form heterohexamers. Forms a complex composed of ubxn-3, cdc-48.1 and/or cdc-48.2 and substrate cdt-1. Interacts (via N-terminus) with ubxn-3. Interacts (via N-terminus) with atx-3 (via RRDR motif). Interacts (via N-terminus) with ubxn-5. Interacts with ufd-1. Interacts (via DDDLYN motif) with ufd-2. Interacts (via N-terminus) with ubxn-1. Interacts (via N-terminus) with ubxn-2. Interacts (via N-terminus) with ubxn-4. Interacts with ubxn-6. Expressed in body wall muscles.

It is found in the cytoplasm. The catalysed reaction is ATP + H2O = ADP + phosphate + H(+). The first ATP-binding region has low ATPase activity. The second ATP-binding region is responsible for ATPase activity. ATP binding to the first ATP-binding region induces intrinsic activity of the second ATP-binding region. While ATP binding to the first ATP-binding region appears to prevent ATP hydrolysis by the second ATP-binding region, ADP-binding to first region promotes the coordinate and cooperative ATPase cycle of the second ATP-binding region. ATP binding to the first ATP-binding region induces a conformational change, promoting the rotation of the first ATP-binding region relative to the second ATP-binding region in the hexamer. Inhibited by N-ethylmaleimide (NEM). ATP-dependent chaperone which probably uses the energy provided by ATP hydrolysis to generate mechanical force to unfold substrate proteins, disassemble protein complexes, and disaggregate protein aggregates. However, able to prevent aggregation of unfolded proteins also in an ATP-independent manner. Targets polyubiquitinated proteins for proteasomal degradation by binding to 'Lys-48'-linked polyubiquitin chains. Involved in the cytoplasmic elimination of misfolded proteins exported from the ER. This pathway, known as ERAD, prevents the activation of the unfolded protein response (UPR) caused by the accumulation of misfolded proteins in the ER. Together with udf-2 and chn-1, regulates myosin assembly in body wall muscles by targeting myosin chaperone unc-45 for proteasomal degradation. During oocyte meiosis and together with cdc-48.1, required for chromosome condensation at the diakinesis phase in prophase I and for progression of metaphase I. During the first embryonic cell division, regulates DNA replication and thus chromosome segregation and decondensation, and nuclear envelope re-assembly. In S phase and in association with ufd-1, npl-4.1 and/or npl-4.2 and ubxn-3, ensures the degradation of DNA licensing factor cdt-1 after the initiation of DNA replication and thus the disassembly of the DNA replication CMG helicase complex by promoting the dissociation from chromatin of several of its components including cdc-45 and sld-5. Regulates ubxn-3 nuclear localization during S phase. During the first embryonic cell divisions and together with cdc-48.1, regulates the re-assembly of the nuclear envelope after mitosis possibly by inactivating kinase air-2, a component of the chromosomal passenger complex (CPC). This Caenorhabditis elegans protein is Transitional endoplasmic reticulum ATPase homolog 2 (cdc-48.2).